Reading from the N-terminus, the 276-residue chain is Secretagogin (276 aa).

6 EF-hand domains span residues 12 to 47, 58 to 93, 105 to 140, 149 to 184, 197 to 232, and 240 to 276; these read LDAA…VLTK, NVWK…EDEN, DSSV…LFLH, KLEE…QENF, ERKR…MMEL, and VDLD…KINP. Ca(2+) is bound by residues aspartate 71, serine 73, aspartate 75, histidine 77, glutamate 82, aspartate 118, aspartate 120, serine 122, glutamate 129, aspartate 162, asparagine 164, aspartate 166, arginine 168, aspartate 173, aspartate 210, serine 212, threonine 214, glutamate 221, aspartate 254, asparagine 256, aspartate 258, lysine 260, and glutamate 265.

It is found in the cytoplasm. The protein resides in the secreted. It localises to the cytoplasmic vesicle. The protein localises to the secretory vesicle membrane. This chain is Secretagogin (SCGN), found in Sus scrofa (Pig).